Consider the following 284-residue polypeptide: tRNA uridine(34) hydroxylase (284 aa).

The 95-residue stretch at 132–226 (AGRPVVMLDT…YFEEVGGAHY (95 aa)) folds into the Rhodanese domain. Residue Cys-186 is the Cysteine persulfide intermediate of the active site.

Belongs to the TrhO family.

It catalyses the reaction uridine(34) in tRNA + AH2 + O2 = 5-hydroxyuridine(34) in tRNA + A + H2O. In terms of biological role, catalyzes oxygen-dependent 5-hydroxyuridine (ho5U) modification at position 34 in tRNAs. The polypeptide is tRNA uridine(34) hydroxylase (Burkholderia cenocepacia (strain HI2424)).